A 971-amino-acid chain; its full sequence is Exportin-2 (971 aa).

The region spanning 29–102 is the Importin N-terminal domain; sequence AEKFLESVEG…KANIVNLMLT (74 aa).

The protein belongs to the XPO2/CSE1 family. As to quaternary structure, interacts with cftr. In terms of tissue distribution, detected in larval gut, liver, exocrine pancreas and part of the brain and retina at 96 hpf.

The protein localises to the cytoplasm. It localises to the nucleus. It is found in the apical cell membrane. The protein resides in the basal cell membrane. Its subcellular location is the lateral cell membrane. In terms of biological role, export receptor for importin alpha. Mediates importin-alpha re-export from the nucleus to the cytoplasm after import substrates have been released into the nucleoplasm. Negatively regulates fluid secretion and plays a role in fluid homeostasis by down-regulating cftr activity. The sequence is that of Exportin-2 (cse1l) from Danio rerio (Zebrafish).